The sequence spans 178 residues: uncharacterized protein (178 aa).

The N-terminal stretch at 1–19 (MKKNIHILGASGVGTSTLG) is a signal peptide.

This is an uncharacterized protein from Bacillus subtilis (strain 168).